A 467-amino-acid polypeptide reads, in one-letter code: Squalene synthase (467 aa).

Belongs to the phytoene/squalene synthase family. The cofactor is Mg(2+).

It catalyses the reaction 2 (2E,6E)-farnesyl diphosphate + NADPH + H(+) = squalene + 2 diphosphate + NADP(+). The enzyme catalyses 2 (2E,6E)-farnesyl diphosphate + NADH + H(+) = squalene + 2 diphosphate + NAD(+). The protein operates within terpene metabolism; lanosterol biosynthesis; lanosterol from farnesyl diphosphate: step 1/3. Functionally, squalene synthase; part of the third module of ergosterol biosynthesis pathway that includes the late steps of the pathway. The third module or late pathway involves the ergosterol synthesis itself through consecutive reactions that mainly occur in the endoplasmic reticulum (ER) membrane. Firstly, the squalene synthase SQS catalyzes the condensation of 2 farnesyl pyrophosphate moieties to form squalene, which is the precursor of all steroids. Secondly, the squalene epoxidase catalyzes the stereospecific oxidation of squalene to (S)-2,3-epoxysqualene, which is considered to be a rate-limiting enzyme in steroid biosynthesis. Then, the lanosterol synthase LS catalyzes the cyclization of (S)-2,3 oxidosqualene to lanosterol, a reaction that forms the sterol core. In the next steps, lanosterol is transformed to ergosterol via a complex process involving various demethylation, reduction and desaturation reactions. Lanosterol is also an intermediate in the biosynthesis of triterpenes such as ganoderic acids (GA), a group of highly oxygenated lanostane-type triterpenoids which are well recognized as a main group of unique bioactive compounds in the medicinal mushroom Ganoderma lucidum. The sequence is that of Squalene synthase from Ganoderma lucidum (Ling zhi medicinal fungus).